A 327-amino-acid chain; its full sequence is Serine/threonine-protein phosphatase PP1-beta catalytic subunit (327 aa).

Ala-2 carries the N-acetylalanine modification. Residues Asp-63, His-65, Asp-91, and Asn-123 each coordinate Mn(2+). His-124 acts as the Proton donor in catalysis. Mn(2+) contacts are provided by His-172 and His-247. A disordered region spans residues 305 to 327 (QYGGLNSGRPVTPPRTANPPKKR). A Phosphothreonine modification is found at Thr-316.

The protein belongs to the PPP phosphatase family. PP-1 subfamily. PP1 comprises a catalytic subunit, PPP1CA, PPP1CB or PPP1CC, which is folded into its native form by inhibitor 2 and glycogen synthetase kinase 3, and then complexed to one or several targeting or regulatory subunits. The targeting or regulatory subunits determine the substrate specificity of PP1. PPP1R12A, PPP1R12B and PPP1R12C mediate binding to myosin. PPP1R3A (in skeletal muscle), PPP1R3B (in liver), PPP1R3C, PPP1R3D and PPP1R3F (in brain) mediate binding to glycogen. PPP1R15A and PPP1R15B mediate binding to EIF2S1. Part of a complex containing PPP1R15B, PP1 and NCK1/2. Interacts with PPP1R7 and PPP1R12C. Interacts with PPP1R16B. Component of the PTW/PP1 phosphatase complex, composed of PPP1R10/PNUTS, TOX4, WDR82, and PPP1CA or PPP1CB or PPP1CC. Interacts with PPP1R8. Interacts with PPP1R12A and NUAK1; the interaction is direct. Interacts with TRIM28; the interaction is weak. Interacts with FOXP3. Interacts with RRP1B. Interacts with SERPINE1. Interacts with LZTR1. Component of the SHOC2-MRAS-PP1c (SMP) complex consisting of SHOC2, GTP-bound M-Ras/MRAS and the catalytic subunit of protein phosphatase 1 (either PPP1CA, PPP1CB or PPP1CC). SHOC2 and PP1c preferably bind M-Ras/MRAS, but they also bind K-Ras/KRAS, N-Ras/NRAS and H-Ras/HRAS; these interactions are GTP-dependent and both SHOC2 and PP1c are required to form a stable complex. Interacts with SHOC2 in the absence of Ras GTPases. Mn(2+) is required as a cofactor.

The protein resides in the cytoplasm. It localises to the nucleus. Its subcellular location is the nucleoplasm. It is found in the nucleolus. It catalyses the reaction O-phospho-L-seryl-[protein] + H2O = L-seryl-[protein] + phosphate. It carries out the reaction O-phospho-L-threonyl-[protein] + H2O = L-threonyl-[protein] + phosphate. The enzyme catalyses O-phospho-L-seryl-[myosin light chain] + H2O = L-seryl-[myosin light chain] + phosphate. The catalysed reaction is O-phospho-L-threonyl-[myosin light chain] + H2O = L-threonyl-[myosin light chain] + phosphate. Inhibited by the toxins okadaic acid, tautomycin and microcystin Leu-Arg. The phosphatase activity of the PPP1R15A-PP1 complex toward EIF2S1 is specifically inhibited by Salubrinal, a drug that protects cells from endoplasmic reticulum stress. Its function is as follows. Protein phosphatase that associates with over 200 regulatory proteins to form highly specific holoenzymes which dephosphorylate hundreds of biological targets. Protein phosphatase (PP1) is essential for cell division, it participates in the regulation of glycogen metabolism, muscle contractility and protein synthesis. Involved in regulation of ionic conductances and long-term synaptic plasticity. Component of the PTW/PP1 phosphatase complex, which plays a role in the control of chromatin structure and cell cycle progression during the transition from mitosis into interphase. In balance with CSNK1D and CSNK1E, determines the circadian period length, through the regulation of the speed and rhythmicity of PER1 and PER2 phosphorylation. May dephosphorylate CSNK1D and CSNK1E. Core component of the SHOC2-MRAS-PP1c (SMP) holophosphatase complex that regulates the MAPK pathway activation. The SMP complex specifically dephosphorylates the inhibitory phosphorylation at 'Ser-259' of RAF1 kinase, 'Ser-365' of BRAF kinase and 'Ser-214' of ARAF kinase, stimulating their kinase activities. The SMP complex enhances the dephosphorylation activity and substrate specificity of PP1c. This is Serine/threonine-protein phosphatase PP1-beta catalytic subunit (PPP1CB) from Bos taurus (Bovine).